Reading from the N-terminus, the 89-residue chain is Small ribosomal subunit protein uS15 (89 aa).

Belongs to the universal ribosomal protein uS15 family. As to quaternary structure, part of the 30S ribosomal subunit. Forms a bridge to the 50S subunit in the 70S ribosome, contacting the 23S rRNA.

In terms of biological role, one of the primary rRNA binding proteins, it binds directly to 16S rRNA where it helps nucleate assembly of the platform of the 30S subunit by binding and bridging several RNA helices of the 16S rRNA. Functionally, forms an intersubunit bridge (bridge B4) with the 23S rRNA of the 50S subunit in the ribosome. The polypeptide is Small ribosomal subunit protein uS15 (Aliivibrio salmonicida (strain LFI1238) (Vibrio salmonicida (strain LFI1238))).